A 158-amino-acid chain; its full sequence is 2-C-methyl-D-erythritol 2,4-cyclodiphosphate synthase (158 aa).

Positions 9 and 11 each coordinate a divalent metal cation. 4-CDP-2-C-methyl-D-erythritol 2-phosphate-binding positions include 9–11 and 35–36; these read DVH and HS. Residue His-43 participates in a divalent metal cation binding. Residues 57 to 59, 62 to 66, 133 to 136, Phe-140, and Arg-143 contribute to the 4-CDP-2-C-methyl-D-erythritol 2-phosphate site; these read DIG, FPDTD, and TTTE.

This sequence belongs to the IspF family. In terms of assembly, homotrimer. Requires a divalent metal cation as cofactor.

It carries out the reaction 4-CDP-2-C-methyl-D-erythritol 2-phosphate = 2-C-methyl-D-erythritol 2,4-cyclic diphosphate + CMP. Its pathway is isoprenoid biosynthesis; isopentenyl diphosphate biosynthesis via DXP pathway; isopentenyl diphosphate from 1-deoxy-D-xylulose 5-phosphate: step 4/6. In terms of biological role, involved in the biosynthesis of isopentenyl diphosphate (IPP) and dimethylallyl diphosphate (DMAPP), two major building blocks of isoprenoid compounds. Catalyzes the conversion of 4-diphosphocytidyl-2-C-methyl-D-erythritol 2-phosphate (CDP-ME2P) to 2-C-methyl-D-erythritol 2,4-cyclodiphosphate (ME-CPP) with a corresponding release of cytidine 5-monophosphate (CMP). This is 2-C-methyl-D-erythritol 2,4-cyclodiphosphate synthase from Actinobacillus pleuropneumoniae serotype 5b (strain L20).